We begin with the raw amino-acid sequence, 427 residues long: Serine--tRNA ligase (427 aa).

231-233 (TAE) contacts L-serine. 262-264 (RSE) provides a ligand contact to ATP. Glu-285 is an L-serine binding site. Residue 349-352 (EISS) participates in ATP binding. Residue Ser-385 coordinates L-serine.

The protein belongs to the class-II aminoacyl-tRNA synthetase family. Type-1 seryl-tRNA synthetase subfamily. As to quaternary structure, homodimer. The tRNA molecule binds across the dimer.

It localises to the cytoplasm. It carries out the reaction tRNA(Ser) + L-serine + ATP = L-seryl-tRNA(Ser) + AMP + diphosphate + H(+). The catalysed reaction is tRNA(Sec) + L-serine + ATP = L-seryl-tRNA(Sec) + AMP + diphosphate + H(+). It functions in the pathway aminoacyl-tRNA biosynthesis; selenocysteinyl-tRNA(Sec) biosynthesis; L-seryl-tRNA(Sec) from L-serine and tRNA(Sec): step 1/1. In terms of biological role, catalyzes the attachment of serine to tRNA(Ser). Is also able to aminoacylate tRNA(Sec) with serine, to form the misacylated tRNA L-seryl-tRNA(Sec), which will be further converted into selenocysteinyl-tRNA(Sec). This Brucella canis (strain ATCC 23365 / NCTC 10854 / RM-666) protein is Serine--tRNA ligase.